The sequence spans 261 residues: Mite allergen Der p 3 (261 aa).

Residues 1 to 18 (MIIYNILIVLLLAINTLA) form the signal peptide. Residues 19–29 (NPILPASPNAT) constitute a propeptide that is removed on maturation. Residues 30–260 (IVGGEKALAG…FIDWIESKRS (231 aa)) form the Peptidase S1 domain. C54 and C70 are oxidised to a cystine. Residues H69 and D114 each act as charge relay system in the active site. 2 cysteine pairs are disulfide-bonded: C181–C198 and C210–C236. S214 (charge relay system) is an active-site residue.

The protein belongs to the peptidase S1 family.

Its subcellular location is the secreted. The polypeptide is Mite allergen Der p 3 (DERP3) (Dermatophagoides pteronyssinus (European house dust mite)).